Consider the following 187-residue polypeptide: dCTP deaminase (187 aa).

DCTP contacts are provided by residues K107–R112, T131–E133, Q152, Y166, K175, and Q176. E133 serves as the catalytic Proton donor/acceptor.

It belongs to the dCTP deaminase family. In terms of assembly, homotrimer.

The enzyme catalyses dCTP + H2O + H(+) = dUTP + NH4(+). The protein operates within pyrimidine metabolism; dUMP biosynthesis; dUMP from dCTP (dUTP route): step 1/2. In terms of biological role, catalyzes the deamination of dCTP to dUTP. This chain is dCTP deaminase, found in Ehrlichia canis (strain Jake).